Reading from the N-terminus, the 275-residue chain is MNALTPLSARLERSDGHALVTLARSRGAVRLRDLAQRGSAKAFLPRVEGDVPEVVFLNTSGGLTGGDRLSYRLELGAGCRATATTQTAERAYAAGAGAARVEVLHEVGRDGWLDWLPQETILFEGAALERETQISLAPGAGCLMVESVVLGRAAMGETLSRLAFRDRRSILRAGKPVLVEPLALDDRALAAAGGAAMLGGARALATLAMVGPGAEDALGPARAALGEAGVEAAASAFDGKLVLRLLAADGWPLRRQVARLLTVLRGRALPRVWQV.

The protein belongs to the UreD family. UreD, UreF and UreG form a complex that acts as a GTP-hydrolysis-dependent molecular chaperone, activating the urease apoprotein by helping to assemble the nickel containing metallocenter of UreC. The UreE protein probably delivers the nickel.

Its subcellular location is the cytoplasm. Required for maturation of urease via the functional incorporation of the urease nickel metallocenter. In Cereibacter sphaeroides (strain ATCC 17029 / ATH 2.4.9) (Rhodobacter sphaeroides), this protein is Urease accessory protein UreD.